We begin with the raw amino-acid sequence, 385 residues long: Interleukin-13 receptor subunit alpha-2 (385 aa).

Residues Met1–Ser23 form the signal peptide. At Leu24 to Lys336 the chain is on the extracellular side. 3 consecutive Fibronectin type-III domains span residues Pro30–Gly130, Gly133–Ser221, and Pro236–Asp334. A disulfide bridge links Cys61 with Cys109. Asn111 carries an N-linked (GlcNAc...) asparagine glycan. An intrachain disulfide couples Cys141 to Cys151. Asn164 carries N-linked (GlcNAc...) asparagine glycosylation. A disulfide bridge connects residues Cys180 and Cys193. 2 N-linked (GlcNAc...) asparagine glycosylation sites follow: Asn211 and Asn295. A disulfide bond links Cys265 and Cys312. The WSXWS motif motif lies at Trp318–Ser322. The helical transmembrane segment at Ile337–Ile357 threads the bilayer. The Cytoplasmic segment spans residues Val358 to Cys385.

This sequence belongs to the type I cytokine receptor family. Type 5 subfamily. Interacts with IL4RA. Interacts with high affinity to interleukin-13 (IL13), but not to interleukin-4 (IL4). Cleaved by MMP8 leading to a soluble form that is also able to interact with IL13.

Its subcellular location is the cell membrane. Functionally, cell surface receptor that plays a role in the regulation of IL-13-mediated responses. Functions as a decoy receptor that inhibits IL-13- and IL-4-mediated signal transduction via the JAK-STAT pathway and thereby modulates immune responses and inflammation. Serves as a functional signaling receptor for IL-13 in an alternative pathway involving AP-1 ultimately leading to the production of TGFB1. The sequence is that of Interleukin-13 receptor subunit alpha-2 (Il13ra2) from Rattus norvegicus (Rat).